Consider the following 142-residue polypeptide: Nitrogen fixation protein NifU 2 (142 aa).

A disordered region spans residues 1–36; the sequence is MKDLFDESLTLDTGSAAPGTAPGRPRRRQPAGGKAP. A compositionally biased stretch (low complexity) spans 14–23; sequence GSAAPGTAPG.

The protein belongs to the NifU family.

May be involved in the formation or repair of [Fe-S] clusters present in iron-sulfur proteins. In Rhodobacter capsulatus (Rhodopseudomonas capsulata), this protein is Nitrogen fixation protein NifU 2 (nifU2).